The following is a 248-amino-acid chain: Putative TrmH family tRNA/rRNA methyltransferase (248 aa).

Positions 196, 216, and 225 each coordinate S-adenosyl-L-methionine.

Belongs to the class IV-like SAM-binding methyltransferase superfamily. RNA methyltransferase TrmH family.

This chain is Putative TrmH family tRNA/rRNA methyltransferase, found in Staphylococcus aureus (strain COL).